The following is a 357-amino-acid chain: Histidinol-phosphate aminotransferase 1 (357 aa).

An N6-(pyridoxal phosphate)lysine modification is found at lysine 210.

Belongs to the class-II pyridoxal-phosphate-dependent aminotransferase family. Histidinol-phosphate aminotransferase subfamily. In terms of assembly, homodimer. The cofactor is pyridoxal 5'-phosphate.

The enzyme catalyses L-histidinol phosphate + 2-oxoglutarate = 3-(imidazol-4-yl)-2-oxopropyl phosphate + L-glutamate. It participates in amino-acid biosynthesis; L-histidine biosynthesis; L-histidine from 5-phospho-alpha-D-ribose 1-diphosphate: step 7/9. The polypeptide is Histidinol-phosphate aminotransferase 1 (Methylococcus capsulatus (strain ATCC 33009 / NCIMB 11132 / Bath)).